Reading from the N-terminus, the 133-residue chain is ATP synthase epsilon chain (133 aa).

This sequence belongs to the ATPase epsilon chain family. In terms of assembly, F-type ATPases have 2 components, CF(1) - the catalytic core - and CF(0) - the membrane proton channel. CF(1) has five subunits: alpha(3), beta(3), gamma(1), delta(1), epsilon(1). CF(0) has three main subunits: a, b and c.

The protein resides in the cell membrane. In terms of biological role, produces ATP from ADP in the presence of a proton gradient across the membrane. This chain is ATP synthase epsilon chain, found in Halalkalibacterium halodurans (strain ATCC BAA-125 / DSM 18197 / FERM 7344 / JCM 9153 / C-125) (Bacillus halodurans).